A 447-amino-acid polypeptide reads, in one-letter code: Beta-glucuronosyltransferase GlcAT14A (447 aa).

The Cytoplasmic segment spans residues Met-1–Lys-33. Residues Trp-34–Thr-54 traverse the membrane as a helical; Signal-anchor for type II membrane protein segment. Residues Thr-55 to Lys-447 are Lumenal-facing. Asn-151, Asn-200, Asn-329, and Asn-405 each carry an N-linked (GlcNAc...) asparagine glycan.

This sequence belongs to the glycosyltransferase 14 family.

It is found in the golgi apparatus membrane. Functionally, beta-glucuronosyltransferase involved in the biosynthesis of type II arabinogalactan (AG). Modifies both the beta-1,6-linked galactan and beta-1,3-linked galactan present in type II AG. Transfers glucuronate to beta-1,6-galactooligosaccharides with degrees of polymerization ranging from 3 to 11. Transfers glucuronate to beta-1,3-galactooligosaccharides with degrees of polymerization ranging from 5 to 7. The addition of glucuronate at the O6 position may terminate galactose chain extension. Required for cell elongation during seedling growth. In Arabidopsis thaliana (Mouse-ear cress), this protein is Beta-glucuronosyltransferase GlcAT14A.